The following is a 232-amino-acid chain: LexA repressor (232 aa).

Residues phenylalanine 26 to threonine 46 constitute a DNA-binding region (H-T-H motif). Residues serine 153 and lysine 191 each act as for autocatalytic cleavage activity in the active site.

Belongs to the peptidase S24 family. In terms of assembly, homodimer.

It carries out the reaction Hydrolysis of Ala-|-Gly bond in repressor LexA.. Represses a number of genes involved in the response to DNA damage (SOS response), including recA and lexA. In the presence of single-stranded DNA, RecA interacts with LexA causing an autocatalytic cleavage which disrupts the DNA-binding part of LexA, leading to derepression of the SOS regulon and eventually DNA repair. This chain is LexA repressor, found in Afipia carboxidovorans (strain ATCC 49405 / DSM 1227 / KCTC 32145 / OM5) (Oligotropha carboxidovorans).